Here is a 254-residue protein sequence, read N- to C-terminus: N-acetylglucosaminyldiphosphoundecaprenol N-acetyl-beta-D-mannosaminyltransferase (254 aa).

This sequence belongs to the glycosyltransferase 26 family. TagA/TarA subfamily.

It carries out the reaction UDP-N-acetyl-alpha-D-mannosamine + N-acetyl-alpha-D-glucosaminyl-di-trans,octa-cis-undecaprenyl diphosphate = N-acetyl-beta-D-mannosaminyl-(1-&gt;4)-N-acetyl-alpha-D-glucosaminyl di-trans,octa-cis-undecaprenyl diphosphate + UDP + H(+). Its pathway is cell wall biogenesis; poly(ribitol phosphate) teichoic acid biosynthesis. Its function is as follows. Catalyzes the conversion of GlcNAc-PP-undecaprenol into ManNAc-GlcNAc-PP-undecaprenol, the first committed lipid intermediate in the de novo synthesis of teichoic acid. The polypeptide is N-acetylglucosaminyldiphosphoundecaprenol N-acetyl-beta-D-mannosaminyltransferase (Staphylococcus aureus (strain NCTC 8325 / PS 47)).